The chain runs to 1129 residues: Protein DWARF 53-LIKE (1129 aa).

The region spanning 8 to 180 is the Clp R domain; that stretch reads ARQCLSPAAV…KLAILRPAPP (173 aa). Repeat stretches follow at residues 12–85 and 102–180; these read LSPA…LDRL and VSNS…PAPP. Positions 519–573 are disordered; it reads RYIGVPADKERSANPSKGSESIGVQKDVIKPCAVSAVHSSSTARPISSPSVTNKR. The span at 557–568 shows a compositional bias: low complexity; that stretch reads SSSTARPISSPS. The EAR 1 signature appears at 577–581; the sequence is LVLNL. The interval 587 to 654 is disordered; sequence KSDENLQERG…KRVEDSERSV (68 aa). Residues 596 to 608 show a composition bias toward polar residues; that stretch reads GMQSQHGTLSNAD. Over residues 645 to 654 the composition is skewed to basic and acidic residues; it reads KRVEDSERSV. Short sequence motifs (EAR) lie at residues 798 to 802 and 975 to 980; these read LDLNL and FDLNLP. The segment at 975 to 1001 is disordered; the sequence is FDLNLPVDEDEPFDADDDSSSHENSYG. Positions 981 to 992 are enriched in acidic residues; that stretch reads VDEDEPFDADDD.

It belongs to the ClpA/ClpB family. Polyubiquitinated. Strigolactone, but not karrikin, triggers rapid SCF(D3)-dependent degradation via the proteasome.

In terms of biological role, repressor of strigolactones (SL) signaling. Subjected to a negative feedback control of SL signaling. This chain is Protein DWARF 53-LIKE, found in Oryza sativa subsp. japonica (Rice).